A 174-amino-acid polypeptide reads, in one-letter code: NADH-ubiquinone oxidoreductase chain 6 (174 aa).

The next 5 membrane-spanning stretches (helical) occupy residues 1–21 (MTYV…GFSS), 24–44 (SPIY…GIVL), 46–66 (FGGS…MLVV), 86–106 (VMIL…VVYM), and 151–171 (WLMV…IEIT).

Belongs to the complex I subunit 6 family. In terms of assembly, core subunit of respiratory chain NADH dehydrogenase (Complex I) which is composed of 45 different subunits.

It localises to the mitochondrion inner membrane. It catalyses the reaction a ubiquinone + NADH + 5 H(+)(in) = a ubiquinol + NAD(+) + 4 H(+)(out). In terms of biological role, core subunit of the mitochondrial membrane respiratory chain NADH dehydrogenase (Complex I) which catalyzes electron transfer from NADH through the respiratory chain, using ubiquinone as an electron acceptor. Essential for the catalytic activity and assembly of complex I. This is NADH-ubiquinone oxidoreductase chain 6 (MT-ND6) from Oryctolagus cuniculus (Rabbit).